A 156-amino-acid chain; its full sequence is Nucleosome assembly protein 1-like 5 (156 aa).

Over residues 1 to 16 (MADPEKQGPAESRAED) the composition is skewed to basic and acidic residues. A disordered region spans residues 1 to 58 (MADPEKQGPAESRAEDEVMEGAQGGEDAATGDSAAAPAAEEPQAPAENAPKPKKDFME). Residues 34–49 (AAAPAAEEPQAPAENA) show a composition bias toward low complexity. Residues 68-94 (VLALKKLQKRCDKIEAKFDKEFQALEK) adopt a coiled-coil conformation. Positions 120–156 (TLEGEDDEDDEEEDDEEEEEEEEAAAGATGGPNFAKK) are disordered. The span at 122–143 (EGEDDEDDEEEDDEEEEEEEEA) shows a compositional bias: acidic residues.

The protein belongs to the nucleosome assembly protein (NAP) family.

The protein localises to the nucleus. This chain is Nucleosome assembly protein 1-like 5 (Nap1l5), found in Mus musculus (Mouse).